The sequence spans 310 residues: Aspartate carbamoyltransferase catalytic subunit (310 aa).

2 residues coordinate carbamoyl phosphate: Arg-58 and Thr-59. L-aspartate is bound at residue Lys-86. Carbamoyl phosphate contacts are provided by Arg-108, His-136, and Gln-139. Residues Arg-169 and Arg-222 each contribute to the L-aspartate site. Residues Gly-264 and Pro-265 each coordinate carbamoyl phosphate.

It belongs to the aspartate/ornithine carbamoyltransferase superfamily. ATCase family. Heterododecamer (2C3:3R2) of six catalytic PyrB chains organized as two trimers (C3), and six regulatory PyrI chains organized as three dimers (R2).

It carries out the reaction carbamoyl phosphate + L-aspartate = N-carbamoyl-L-aspartate + phosphate + H(+). It participates in pyrimidine metabolism; UMP biosynthesis via de novo pathway; (S)-dihydroorotate from bicarbonate: step 2/3. In terms of biological role, catalyzes the condensation of carbamoyl phosphate and aspartate to form carbamoyl aspartate and inorganic phosphate, the committed step in the de novo pyrimidine nucleotide biosynthesis pathway. The protein is Aspartate carbamoyltransferase catalytic subunit of Campylobacter fetus subsp. fetus (strain 82-40).